We begin with the raw amino-acid sequence, 740 residues long: NAD(P)H-quinone oxidoreductase subunit 5, chloroplastic (740 aa).

A run of 16 helical transmembrane segments spans residues 9–29, 39–59, 89–109, 125–145, 147–167, 185–205, 231–251, 259–279, 281–301, 328–348, 355–375, 397–417, 426–446, 548–568, 607–627, and 719–739; these read WIIPFVPLLVTMLIGLGLLLI, IWAFPAVLLLSIVMVFSTKLA, IDPLTSIMSILITTVGIMVLI, FAYMSFFNTSMLGLVTSPNLI, IHIFWELVGMCSYLLIGFWFT, GDFGLLLGILGFYLITGSFEF, AFLLFLGAVAKSAQFPLHVWL, TPISALIHAATMVAAGIFLVA, LLPLFIGIPYIMNIISLIGLI, LGYIMLALGIGSYRAALFHLI, ALLFLGSGSIIHSMEPIVGYS, TTFFLGTLSLCGIPPLACFWS, WLYSPIFATIACYTAGLTAFY, TMLFPLLILAIFTLFVGCIGI, FYSVSIAYFGIFIASVLYGSV, and GRISSYLFLYLACVSIVLLLV.

Belongs to the complex I subunit 5 family. NDH is composed of at least 16 different subunits, 5 of which are encoded in the nucleus.

Its subcellular location is the plastid. The protein localises to the chloroplast thylakoid membrane. The enzyme catalyses a plastoquinone + NADH + (n+1) H(+)(in) = a plastoquinol + NAD(+) + n H(+)(out). It carries out the reaction a plastoquinone + NADPH + (n+1) H(+)(in) = a plastoquinol + NADP(+) + n H(+)(out). NDH shuttles electrons from NAD(P)H:plastoquinone, via FMN and iron-sulfur (Fe-S) centers, to quinones in the photosynthetic chain and possibly in a chloroplast respiratory chain. The immediate electron acceptor for the enzyme in this species is believed to be plastoquinone. Couples the redox reaction to proton translocation, and thus conserves the redox energy in a proton gradient. This Nuphar advena (Common spatterdock) protein is NAD(P)H-quinone oxidoreductase subunit 5, chloroplastic (ndhF).